Here is a 499-residue protein sequence, read N- to C-terminus: Cytochrome P450 ARB_01131 (499 aa).

Residues 1-21 (MLSLIVACLVLPLICYKLVRS) form the signal peptide. N-linked (GlcNAc...) asparagine glycosylation is present at Asn23. Cys437 is a binding site for heme.

The protein belongs to the cytochrome P450 family. Requires heme as cofactor.

Functionally, together with an NADPH cytochrome P450 the enzyme system catalyzes the terminal hydroxylation as the first step in the assimilation of alkanes and fatty acids. This Arthroderma benhamiae (strain ATCC MYA-4681 / CBS 112371) (Trichophyton mentagrophytes) protein is Cytochrome P450 ARB_01131.